The chain runs to 947 residues: Probable outer membrane protein pmp19 (947 aa).

Positions 1–19 are cleaved as a signal peptide; sequence MKQMRLWGFLFLSSFCQVS. The 276-residue stretch at 672–947 folds into the Autotransporter domain; that stretch reads IPLQHLCVFG…NAHAGLSLSF (276 aa).

The protein belongs to the PMP outer membrane protein family.

The protein resides in the secreted. It localises to the cell wall. It is found in the cell outer membrane. This chain is Probable outer membrane protein pmp19 (pmp19), found in Chlamydia pneumoniae (Chlamydophila pneumoniae).